Reading from the N-terminus, the 1220-residue chain is Plasma membrane calcium-transporting ATPase 1 (1220 aa).

At G2 the chain carries N-acetylglycine. At 2–105 (GDMANNSVAY…KTFLQLVWEA (104 aa)) the chain is on the cytoplasmic side. A phosphoserine mark is found at S8 and S17. Residues 106–126 (LQDVTLIILEIAAIVSLGLSF) traverse the membrane as a helical segment. Over 127-154 (YQPPEGDNALCGEVSVGEEEGEGETGWI) the chain is Extracellular. The chain crosses the membrane as a helical span at residues 155-175 (EGAAILLSVVCVVLVTAFNDW). The Cytoplasmic segment spans residues 176–366 (SKEKQFRGLQ…KEKSVLQGKL (191 aa)). Residues 297–356 (EEEKKDEKKKEKKNKKQDGAIENRNKAKAQDGAAMEMQPLKSEEGGDGDEKDKKKANLPK) form a disordered region. 2 stretches are compositionally biased toward basic and acidic residues: residues 312 to 325 (KQDG…KAKA) and 337 to 356 (KSEE…NLPK). A Phosphoserine modification is found at S338. Residues 367–386 (TKLAVQIGKAGLLMSAITVI) form a helical membrane-spanning segment. Residues 387–418 (ILVLYFVIDTFWVQKRPWLAECTPIYIQYFVK) are Extracellular-facing. Residues 419 to 439 (FFIIGVTVLVVAVPEGLPLAV) traverse the membrane as a helical segment. The Cytoplasmic segment spans residues 440–855 (TISLAYSVKK…RNVYDSISKF (416 aa)). The active-site 4-aspartylphosphate intermediate is the D475. Mg(2+) is bound by residues D475, T477, and D797. A helical transmembrane segment spans residues 856–876 (LQFQLTVNVVAVIVAFTGACI). The Extracellular portion of the chain corresponds to 877-882 (TQDSPL). A helical membrane pass occupies residues 883-903 (KAVQMLWVNLIMDTLASLALA). At 904 to 927 (TEPPTESLLLRKPYGRNKPLISRT) the chain is on the cytoplasmic side. The chain crosses the membrane as a helical span at residues 928–948 (MMKNILGHAFYQLVVVFTLLF). The Extracellular portion of the chain corresponds to 949–971 (AGEKFFDIDSGRNAPLHAPPSEH). The chain crosses the membrane as a helical span at residues 972–991 (YTIVFNTFVLMQLFNEINAR). At 992-1005 (KIHGERNVFEGIFN) the chain is on the cytoplasmic side. A helical transmembrane segment spans residues 1006 to 1027 (NAIFCTIVLGTFVVQIIIVQFG). Residues 1028-1039 (GKPFSCSELSIE) lie on the Extracellular side of the membrane. A helical membrane pass occupies residues 1040–1060 (QWLWSIFLGMGTLLWGQLIST). Residues 1061 to 1220 (IPTSRLKFLK…SPLHSLETSL (160 aa)) lie on the Cytoplasmic side of the membrane. Residues 1100–1117 (LRRGQILWFRGLNRIQTQ) form a calmodulin-binding subdomain A region. Phosphothreonine; by PKC is present on T1116. The segment at 1118–1220 (IRVVNAFRSS…SPLHSLETSL (103 aa)) is required for basolateral membrane targeting. Residues S1140 and S1155 each carry the phosphoserine modification. Residues 1160–1220 (PLIDDTDAED…SPLHSLETSL (61 aa)) form a disordered region. Phosphothreonine is present on T1165. Residue S1178 is modified to Phosphoserine; by PKA. A Phosphoserine modification is found at S1182. Residues 1200 to 1220 (MNKSATSSSPGSPLHSLETSL) show a composition bias toward polar residues.

The protein belongs to the cation transport ATPase (P-type) (TC 3.A.3) family. Type IIB subfamily. In terms of assembly, monomer. Dimer. Oligomer. Calmodulin binding. Interacts with PDZD11. Interacts with SLC35G1 and STIM1; inhibits calcium-transporting ATPase activity after store depletion. Interacts with YWHAE; interacts with the monomeric and dimeric forms of the YWHAE but prefer the monomer form; this interaction inhibits calcium-transporting ATPase activity. Interacts with NPTN; this interaction stabilizes ATP2B1 and increases ATPase activity; this interaction controls T cell calcium homeostasis following T cell activation. Interacts with EPB41; regulates small intestinal calcium absorption through regulation of membrane expression of ATP2B1. As to expression, isoform B: Ubiquitously expressed. Isoform C: Found in brain cortex, skeletal muscle and heart muscle. Isoform D: Has only been found in fetal skeletal muscle. Isoform K: Found in small intestine and liver. Abundantly expressed in the endometrial epithelial cells and glandular epithelial cells in early-proliferative phase and early-secretory phases.

It is found in the cell membrane. It localises to the basolateral cell membrane. Its subcellular location is the synapse. The protein resides in the presynaptic cell membrane. The protein localises to the cytoplasmic vesicle. It is found in the secretory vesicle. It localises to the synaptic vesicle membrane. The enzyme catalyses Ca(2+)(in) + ATP + H2O = Ca(2+)(out) + ADP + phosphate + H(+). Its function is as follows. Catalyzes the hydrolysis of ATP coupled with the transport of calcium from the cytoplasm to the extracellular space thereby maintaining intracellular calcium homeostasis. Plays a role in blood pressure regulation through regulation of intracellular calcium concentration and nitric oxide production leading to regulation of vascular smooth muscle cells vasoconstriction. Positively regulates bone mineralization through absorption of calcium from the intestine. Plays dual roles in osteoclast differentiation and survival by regulating RANKL-induced calcium oscillations in preosteoclasts and mediating calcium extrusion in mature osteoclasts. Regulates insulin sensitivity through calcium/calmodulin signaling pathway by regulating AKT1 activation and NOS3 activation in endothelial cells. May play a role in synaptic transmission by modulating calcium and proton dynamics at the synaptic vesicles. This chain is Plasma membrane calcium-transporting ATPase 1, found in Homo sapiens (Human).